The sequence spans 242 residues: Methylthioribulose-1-phosphate dehydratase (242 aa).

Residues 1–11 (MAQEIQKENND) are compositionally biased toward basic and acidic residues. The segment at 1–20 (MAQEIQKENNDHLVQSSDPE) is disordered. Cys-100 provides a ligand contact to substrate. Residues His-117 and His-119 each contribute to the Zn(2+) site. The Proton donor/acceptor role is filled by Glu-146. His-202 contacts Zn(2+).

It belongs to the aldolase class II family. MtnB subfamily. The cofactor is Zn(2+).

Its subcellular location is the cytoplasm. The enzyme catalyses 5-(methylsulfanyl)-D-ribulose 1-phosphate = 5-methylsulfanyl-2,3-dioxopentyl phosphate + H2O. It participates in amino-acid biosynthesis; L-methionine biosynthesis via salvage pathway; L-methionine from S-methyl-5-thio-alpha-D-ribose 1-phosphate: step 2/6. Its function is as follows. Catalyzes the dehydration of methylthioribulose-1-phosphate (MTRu-1-P) into 2,3-diketo-5-methylthiopentyl-1-phosphate (DK-MTP-1-P). The polypeptide is Methylthioribulose-1-phosphate dehydratase (Aspergillus niger (strain ATCC MYA-4892 / CBS 513.88 / FGSC A1513)).